Reading from the N-terminus, the 211-residue chain is Peroxiredoxin (211 aa).

The 155-residue stretch at 2–156 (PLIGDKFPEM…IVRMIRAFRV (155 aa)) folds into the Thioredoxin domain. Cysteine 44 acts as the Cysteine sulfenic acid (-SOH) intermediate in catalysis. Arginine 119 serves as a coordination point for substrate. Cysteine 198 and cysteine 204 are oxidised to a cystine.

The protein belongs to the peroxiredoxin family. Prx6 subfamily. In terms of assembly, homodecamer. Pentamer of dimers that assemble into a ring structure.

It localises to the cytoplasm. It carries out the reaction a hydroperoxide + [thioredoxin]-dithiol = an alcohol + [thioredoxin]-disulfide + H2O. In terms of biological role, thiol-specific peroxidase that catalyzes the reduction of hydrogen peroxide and organic hydroperoxides to water and alcohols, respectively. Plays a role in cell protection against oxidative stress by detoxifying peroxides. In Methanothermobacter marburgensis (strain ATCC BAA-927 / DSM 2133 / JCM 14651 / NBRC 100331 / OCM 82 / Marburg) (Methanobacterium thermoautotrophicum), this protein is Peroxiredoxin.